The following is a 22-amino-acid chain: Cysteine-rich venom protein notescatin (22 aa).

Residues 1–15 (SNKKDYQKEIVDKHN) are compositionally biased toward basic and acidic residues. Residues 1–22 (SNKKDYQKEIVDKHNALRRSVK) are disordered.

The protein belongs to the CRISP family. Contains 8 disulfide bonds. As to expression, expressed by the venom gland.

Its subcellular location is the secreted. In Notechis scutatus scutatus (Mainland tiger snake), this protein is Cysteine-rich venom protein notescatin.